We begin with the raw amino-acid sequence, 228 residues long: Nuclear phosphoprotein UL3 homolog (228 aa).

This sequence belongs to the alphaherpesvirinae HHV-1 UL3 family. In terms of processing, phosphorylated.

It localises to the host nucleus. This chain is Nuclear phosphoprotein UL3 homolog (MDV015), found in Gallus gallus (Chicken).